The sequence spans 246 residues: 14-3-3 protein beta/alpha (246 aa).

Residue Met-1 is modified to N-acetylmethionine. Thr-2 is modified (N-acetylthreonine; in 14-3-3 protein beta/alpha, N-terminally processed). Phosphothreonine is present on Thr-2. Lys-5 carries the N6-acetyllysine modification. Lys-51 carries the post-translational modification N6-acetyllysine; alternate. Residue Lys-51 forms a Glycyl lysine isopeptide (Lys-Gly) (interchain with G-Cter in SUMO2); alternate linkage. Phosphoserine is present on Ser-60. Lys-70 bears the N6-acetyllysine mark. Tyr-84 and Tyr-106 each carry 3'-nitrotyrosine. Lys-117 is subject to N6-acetyllysine. 2 positions are modified to phosphoserine: Ser-186 and Ser-232.

This sequence belongs to the 14-3-3 family. In terms of assembly, homodimer. Interacts with SAMSN1 and PRKCE. Interacts with AKAP13. Interacts with SSH1 and TORC2/CRTC2. Interacts with ABL1; the interaction results in cytoplasmic location of ABL1 and inhibition of cABL-mediated apoptosis. Interacts with ROR2 (dimer); the interaction results in phosphorylation of YWHAB on tyrosine residues. Interacts with GAB2. Interacts with YAP1 (phosphorylated form). Interacts with the phosphorylated (by AKT1) form of SRPK2. Interacts with PKA-phosphorylated AANAT. Interacts with MYO1C. Interacts with SIRT2. Interacts with the 'Thr-369' phosphorylated form of DAPK2. Interacts with PI4KB, TBC1D22A and TBC1D22B. Interacts with the 'Ser-1134' and 'Ser-1161' phosphorylated form of SOS1. Interacts (via phosphorylated form) with YWHAB; this interaction occurs in a protein kinase AKT1-dependent manner. Interacts with SLITRK1. Interacts with SYNPO2 (phosphorylated form); YWHAB competes with ACTN2 for interaction with SYNPO2. Interacts with RIPOR2 (via phosphorylated form); this interaction occurs in a chemokine-dependent manner and does not compete for binding of RIPOR2 with RHOA nor blocks inhibition of RIPOR2-mediated RHOA activity. Interacts with MARK2 and MARK3. Interacts with TESK1; the interaction is dependent on the phosphorylation of TESK1 'Ser-439' and inhibits TESK1 kinase activity. Interacts with MEFV. Interacts with HDAC4. Interacts with ADAM22 (via C-terminus). In terms of processing, the alpha, brain-specific form differs from the beta form in being phosphorylated. Phosphorylated on Ser-60 by protein kinase C delta type catalytic subunit in a sphingosine-dependent fashion.

It localises to the cytoplasm. Its subcellular location is the melanosome. Its function is as follows. Adapter protein implicated in the regulation of a large spectrum of both general and specialized signaling pathways. Binds to a large number of partners, usually by recognition of a phosphoserine or phosphothreonine motif. Binding generally results in the modulation of the activity of the binding partner. Negative regulator of osteogenesis. Blocks the nuclear translocation of the phosphorylated form (by AKT1) of SRPK2 and antagonizes its stimulatory effect on cyclin D1 expression resulting in blockage of neuronal apoptosis elicited by SRPK2. Negative regulator of signaling cascades that mediate activation of MAP kinases via AKAP13. The chain is 14-3-3 protein beta/alpha (YWHAB) from Bos taurus (Bovine).